The following is a 307-amino-acid chain: Small ribosomal subunit biogenesis GTPase RsgA (307 aa).

The disordered stretch occupies residues Met-1–Asn-21. Residues Gly-10–Asn-21 show a composition bias toward polar residues. One can recognise a CP-type G domain in the interval Arg-85–Phe-242. Residues Asn-135–Asp-138 and Gly-184–Thr-192 each bind GTP. Zn(2+) contacts are provided by Cys-266, Cys-271, His-273, and Cys-279.

This sequence belongs to the TRAFAC class YlqF/YawG GTPase family. RsgA subfamily. As to quaternary structure, monomer. Associates with 30S ribosomal subunit, binds 16S rRNA. The cofactor is Zn(2+).

It localises to the cytoplasm. Its function is as follows. One of several proteins that assist in the late maturation steps of the functional core of the 30S ribosomal subunit. Helps release RbfA from mature subunits. May play a role in the assembly of ribosomal proteins into the subunit. Circularly permuted GTPase that catalyzes slow GTP hydrolysis, GTPase activity is stimulated by the 30S ribosomal subunit. The protein is Small ribosomal subunit biogenesis GTPase RsgA of Neisseria gonorrhoeae (strain NCCP11945).